A 356-amino-acid polypeptide reads, in one-letter code: UDP-N-acetylglucosamine--N-acetylmuramyl-(pentapeptide) pyrophosphoryl-undecaprenol N-acetylglucosamine transferase (356 aa).

Residues T12–G14, N124, R163, S188, I242, A261–E266, and Q287 contribute to the UDP-N-acetyl-alpha-D-glucosamine site.

This sequence belongs to the glycosyltransferase 28 family. MurG subfamily.

It is found in the cell inner membrane. It carries out the reaction di-trans,octa-cis-undecaprenyl diphospho-N-acetyl-alpha-D-muramoyl-L-alanyl-D-glutamyl-meso-2,6-diaminopimeloyl-D-alanyl-D-alanine + UDP-N-acetyl-alpha-D-glucosamine = di-trans,octa-cis-undecaprenyl diphospho-[N-acetyl-alpha-D-glucosaminyl-(1-&gt;4)]-N-acetyl-alpha-D-muramoyl-L-alanyl-D-glutamyl-meso-2,6-diaminopimeloyl-D-alanyl-D-alanine + UDP + H(+). It participates in cell wall biogenesis; peptidoglycan biosynthesis. Cell wall formation. Catalyzes the transfer of a GlcNAc subunit on undecaprenyl-pyrophosphoryl-MurNAc-pentapeptide (lipid intermediate I) to form undecaprenyl-pyrophosphoryl-MurNAc-(pentapeptide)GlcNAc (lipid intermediate II). This chain is UDP-N-acetylglucosamine--N-acetylmuramyl-(pentapeptide) pyrophosphoryl-undecaprenol N-acetylglucosamine transferase, found in Ectopseudomonas mendocina (strain ymp) (Pseudomonas mendocina).